We begin with the raw amino-acid sequence, 255 residues long: MPRYALRIEYDGGPFAGWQRQAAQASVQGAIETALGRLELGPHTIAAAGRTDTGVHATGQVAHCDLAREWDPFRLAGALNAHLKPLPVAIVAAARVSEEFHARFSAVERRYLFRLLARRAPEVHDRGRVWRVPHPLDAEAMRAGAAHLVGRHDFTTFRAAGCQAASPIKTLDALTLETVEGANGTEYRFHLRARSFLHNQVRSIVGTLERVGAGAWTPDQVREALDARDRAACGPVCPPQGLYLTGVGYPADPFA.

Catalysis depends on Asp-52, which acts as the Nucleophile. Residue Tyr-111 participates in substrate binding.

It belongs to the tRNA pseudouridine synthase TruA family. In terms of assembly, homodimer.

The enzyme catalyses uridine(38/39/40) in tRNA = pseudouridine(38/39/40) in tRNA. In terms of biological role, formation of pseudouridine at positions 38, 39 and 40 in the anticodon stem and loop of transfer RNAs. The protein is tRNA pseudouridine synthase A of Cereibacter sphaeroides (strain KD131 / KCTC 12085) (Rhodobacter sphaeroides).